The following is a 99-amino-acid chain: Aspartyl/glutamyl-tRNA(Asn/Gln) amidotransferase subunit C (99 aa).

This sequence belongs to the GatC family. Heterotrimer of A, B and C subunits.

The enzyme catalyses L-glutamyl-tRNA(Gln) + L-glutamine + ATP + H2O = L-glutaminyl-tRNA(Gln) + L-glutamate + ADP + phosphate + H(+). It catalyses the reaction L-aspartyl-tRNA(Asn) + L-glutamine + ATP + H2O = L-asparaginyl-tRNA(Asn) + L-glutamate + ADP + phosphate + 2 H(+). Its function is as follows. Allows the formation of correctly charged Asn-tRNA(Asn) or Gln-tRNA(Gln) through the transamidation of misacylated Asp-tRNA(Asn) or Glu-tRNA(Gln) in organisms which lack either or both of asparaginyl-tRNA or glutaminyl-tRNA synthetases. The reaction takes place in the presence of glutamine and ATP through an activated phospho-Asp-tRNA(Asn) or phospho-Glu-tRNA(Gln). The sequence is that of Aspartyl/glutamyl-tRNA(Asn/Gln) amidotransferase subunit C from Mycolicibacterium smegmatis (strain ATCC 700084 / mc(2)155) (Mycobacterium smegmatis).